Reading from the N-terminus, the 398-residue chain is ATP-dependent RNA helicase eIF4A (398 aa).

Residues 25–53 carry the Q motif motif; that stretch reads DSFDSMDLKPELLRGVYAYGFERPSAIQQ. The region spanning 56 to 226 is the Helicase ATP-binding domain; the sequence is IKPIIAGHDV…TKFMRDPIRI (171 aa). 69-76 provides a ligand contact to ATP; it reads AQSGTGKT. The short motif at 174-177 is the DEAD box element; that stretch reads DEAD. Positions 237 to 398 constitute a Helicase C-terminal domain; that stretch reads GIKQFYIAVE…EMPMNVADLI (162 aa).

Belongs to the DEAD box helicase family. eIF4A subfamily. As to quaternary structure, component of the eIF4F complex, which composition varies with external and internal environmental conditions. It is composed of at least eIF4A, eIF4E and eIF4G.

Its subcellular location is the cytoplasm. The catalysed reaction is ATP + H2O = ADP + phosphate + H(+). ATP-dependent RNA helicase which is a subunit of the eIF4F complex involved in cap recognition and is required for mRNA binding to ribosome. In the current model of translation initiation, eIF4A unwinds RNA secondary structures in the 5'-UTR of mRNAs which is necessary to allow efficient binding of the small ribosomal subunit, and subsequent scanning for the initiator codon. The sequence is that of ATP-dependent RNA helicase eIF4A (tif1) from Aspergillus niger (strain ATCC MYA-4892 / CBS 513.88 / FGSC A1513).